The chain runs to 100 residues: Co-chaperonin GroES (100 aa).

The protein belongs to the GroES chaperonin family. As to quaternary structure, heptamer of 7 subunits arranged in a ring. Interacts with the chaperonin GroEL.

The protein localises to the cytoplasm. Functionally, together with the chaperonin GroEL, plays an essential role in assisting protein folding. The GroEL-GroES system forms a nano-cage that allows encapsulation of the non-native substrate proteins and provides a physical environment optimized to promote and accelerate protein folding. GroES binds to the apical surface of the GroEL ring, thereby capping the opening of the GroEL channel. In Mycolicibacterium vanbaalenii (strain DSM 7251 / JCM 13017 / BCRC 16820 / KCTC 9966 / NRRL B-24157 / PYR-1) (Mycobacterium vanbaalenii), this protein is Co-chaperonin GroES.